We begin with the raw amino-acid sequence, 222 residues long: UPF0758 protein CT0611 (222 aa).

In terms of domain architecture, MPN spans 100-222 (KVKGARDVFE…WFSFRDHALL (123 aa)). Positions 171, 173, and 184 each coordinate Zn(2+). The JAMM motif motif lies at 171-184 (HNHPSGDVQPSNAD).

It belongs to the UPF0758 family.

This Chlorobaculum tepidum (strain ATCC 49652 / DSM 12025 / NBRC 103806 / TLS) (Chlorobium tepidum) protein is UPF0758 protein CT0611.